We begin with the raw amino-acid sequence, 590 residues long: Phosphomethylpyrimidine synthase (590 aa).

Residues Asn197, Met226, Tyr255, His291, 311-313 (SRG), 352-355 (DGLR), and Glu391 each bind substrate. His395 provides a ligand contact to Zn(2+). Tyr418 contacts substrate. Position 459 (His459) interacts with Zn(2+). The [4Fe-4S] cluster site is built by Cys539, Cys542, and Cys547.

Belongs to the ThiC family. [4Fe-4S] cluster is required as a cofactor.

It carries out the reaction 5-amino-1-(5-phospho-beta-D-ribosyl)imidazole + S-adenosyl-L-methionine = 4-amino-2-methyl-5-(phosphooxymethyl)pyrimidine + CO + 5'-deoxyadenosine + formate + L-methionine + 3 H(+). It participates in cofactor biosynthesis; thiamine diphosphate biosynthesis. In terms of biological role, catalyzes the synthesis of the hydroxymethylpyrimidine phosphate (HMP-P) moiety of thiamine from aminoimidazole ribotide (AIR) in a radical S-adenosyl-L-methionine (SAM)-dependent reaction. The chain is Phosphomethylpyrimidine synthase from Bacillus subtilis (strain 168).